We begin with the raw amino-acid sequence, 811 residues long: tRNA(Met) cytidine acetyltransferase TmcA (811 aa).

Residues Q267 and R440 each contribute to the ATP site. The N-acetyltransferase domain occupies 474–663 (RKEVYLEEPD…GEFTAIVLKP (190 aa)). Residues 590-592 (IAT), E630, and R637 contribute to the acetyl-CoA site.

This sequence belongs to the TmcA family.

It localises to the cytoplasm. It carries out the reaction cytidine(34) in elongator tRNA(Met) + acetyl-CoA + ATP + H2O = N(4)-acetylcytidine(34) in elongator tRNA(Met) + ADP + phosphate + CoA + H(+). The enzyme catalyses a cytidine in RNA + acetyl-CoA + ATP + H2O = an N(4)-acetylcytidine in RNA + ADP + phosphate + CoA + H(+). The catalysed reaction is a cytidine in tRNA + acetyl-CoA + ATP + H2O = an N(4)-acetylcytidine in tRNA + ADP + phosphate + CoA + H(+). It catalyses the reaction a cytidine in mRNA + acetyl-CoA + ATP + H2O = an N(4)-acetylcytidine in mRNA + ADP + phosphate + CoA + H(+). In terms of biological role, catalyzes the formation of N(4)-acetylcytidine (ac(4)C) at the wobble position of tRNA(Met), by using acetyl-CoA as an acetyl donor and ATP (or GTP). Functionally, catalyzes the formation of 404 N(4)-acetylcytidine (ac(4)C) sites in RNA, almost always on the middle C of a CCG motif. There 173 ac(4)C sites in rRNA, 35 in non-coding (nc)RNA, 119 in mRNA and 77 in tRNA. More acetylation is observed at 85 and 95 than at 65 or 75 degrees Celsius. The sequence is that of tRNA(Met) cytidine acetyltransferase TmcA from Thermococcus kodakarensis (strain ATCC BAA-918 / JCM 12380 / KOD1) (Pyrococcus kodakaraensis (strain KOD1)).